A 276-amino-acid polypeptide reads, in one-letter code: O-methyltransferase cnsE (276 aa).

Residues Gln-110, 133–134 (DA), and His-155 each bind S-adenosyl-L-methionine.

The protein belongs to the methyltransferase superfamily. S-adenosyl-L-methionine serves as cofactor.

It functions in the pathway alkaloid biosynthesis. Its function is as follows. O-methyltransferase; part of the gene cluster that mediates the biosynthesis of communesins, a prominent class of indole alkaloids with great potential as pharmaceuticals. Communesins are biosynthesized by the coupling of tryptamine and aurantioclavine, two building blocks derived from L-tryptophan. The L-tryptophan decarboxylase cnsB converts L-tryptophan to tryptamine, whereas the tryptophan dimethylallyltransferase cnsF converts L-tryptophan to 4-dimethylallyl tryptophan which is further transformed to aurantioclavine by the aurantioclavine synthase cnsA, probably aided by the catalase cnsD. The cytochrome P450 monooxygenase cnsC catalyzes the heterodimeric coupling between the two different indole moieties, tryptamine and aurantioclavine, to construct vicinal quaternary stereocenters and yield the heptacyclic communesin scaffold. The O-methyltransferase cnsE then methylates the communesin scaffold to produce communesin K, the simplest characterized communesin that contains the heptacyclic core. The dioxygenase cnsJ converts communesin K into communesin I. Acylation to introduce the hexadienyl group at position N16 of communesin I by the acyltransferase cnsK leads to the production of communesin B. The hexadienyl group is produced by the highly reducing polyketide synthase cnsI, before being hydrolytically removed from cnsI by the serine hydrolase cnsH, converted into hexadienyl-CoA by the CoA ligase cnsG, and then transferred to communesin I by cnsK. Surprisingly, cnsK may also be a promiscuous acyltransferase that can tolerate a range of acyl groups, including acetyl-, propionyl-, and butyryl-CoA, which lead to communesins A, G and H respectively. The roles of the alpha-ketoglutarate-dependent dioxygenases cnsM and cnsP have still to be determined. The polypeptide is O-methyltransferase cnsE (Penicillium expansum (Blue mold rot fungus)).